The following is a 130-amino-acid chain: Small ribosomal subunit protein uS11 (130 aa).

Belongs to the universal ribosomal protein uS11 family. As to quaternary structure, part of the 30S ribosomal subunit. Interacts with proteins S7 and S18. Binds to IF-3.

Located on the platform of the 30S subunit, it bridges several disparate RNA helices of the 16S rRNA. Forms part of the Shine-Dalgarno cleft in the 70S ribosome. This is Small ribosomal subunit protein uS11 from Tropheryma whipplei (strain TW08/27) (Whipple's bacillus).